Reading from the N-terminus, the 41-residue chain is Large ribosomal subunit protein bL36 (41 aa).

Belongs to the bacterial ribosomal protein bL36 family.

This chain is Large ribosomal subunit protein bL36, found in Caulobacter vibrioides (strain ATCC 19089 / CIP 103742 / CB 15) (Caulobacter crescentus).